We begin with the raw amino-acid sequence, 203 residues long: Interferon type B (203 aa).

Positions 1–27 are cleaved as a signal peptide; that stretch reads MTANHQSPGMHSILLLLLLPALTTTFS. Cystine bridges form between Cys28-Cys125 and Cys57-Cys164. N-linked (GlcNAc...) asparagine glycosylation is found at Asn37 and Asn160.

Belongs to the alpha/beta interferon family.

Its subcellular location is the secreted. In terms of biological role, has antiviral activities. This is Interferon type B (IFNB) from Gallus gallus (Chicken).